The sequence spans 407 residues: Nuclear hormone receptor family member nhr-134 (407 aa).

The NR C4-type zinc finger occupies 11–31 (CEICGQKTSGRHFGVMSCRSC). The NR C4-type; degenerate zinc finger occupies 47 to 66 (RCPNGNCKLLENGKFKCKKC). The region spanning 157 to 407 (QFHNSLERLA…FSEPDMFEST (251 aa)) is the NR LBD domain.

Belongs to the nuclear hormone receptor family.

Its subcellular location is the nucleus. Its function is as follows. Orphan nuclear receptor. In Caenorhabditis elegans, this protein is Nuclear hormone receptor family member nhr-134 (nhr-134).